The sequence spans 363 residues: MTAPAPRPGIMDIRPYVGGESAIEGVDRILKLSSNEGALGPSPKAMEALRAMAPEMHRYPDGGAEDLRKAIGARFGLDASRIVCGAGSDELLGILCRAYAGPGDEVLYSAHGFLMYAIAAKACGATPVTAPEVDLTANVDNLLAAVTPRTKILFLANPNNPTGTYLPATEVARLRAGLRADILLVIDAAYTEFVSRNDYSGGIELVEAGDNVVVCRTFSKMYALGGLRLGWAYCPENVAGVLNRVRNPFNVGAPALAAGLAAFNDTAYAELCKSHNDYWLPWLSGQLAELGLTVVPSVCNFILVRFPKDAGKDAGAADKFLRSKGIIVRAMGGYGLGDCLRITIGTGEENQLVVAALKEFVGA.

An N6-(pyridoxal phosphate)lysine modification is found at Lys-220.

Belongs to the class-II pyridoxal-phosphate-dependent aminotransferase family. Histidinol-phosphate aminotransferase subfamily. In terms of assembly, homodimer. It depends on pyridoxal 5'-phosphate as a cofactor.

The catalysed reaction is L-histidinol phosphate + 2-oxoglutarate = 3-(imidazol-4-yl)-2-oxopropyl phosphate + L-glutamate. Its pathway is amino-acid biosynthesis; L-histidine biosynthesis; L-histidine from 5-phospho-alpha-D-ribose 1-diphosphate: step 7/9. This Paramagnetospirillum magneticum (strain ATCC 700264 / AMB-1) (Magnetospirillum magneticum) protein is Histidinol-phosphate aminotransferase.